A 152-amino-acid chain; its full sequence is Transcriptional regulator MraZ (152 aa).

2 SpoVT-AbrB domains span residues 5 to 52 and 81 to 124; these read ATLV…PLPE and ASEC…DETT.

It belongs to the MraZ family. In terms of assembly, dodecamer.

The protein resides in the cytoplasm. The protein localises to the nucleoid. In terms of biological role, negatively regulates its own expression and that of the subsequent genes in the proximal part of the division and cell wall (dcw) gene cluster. Acts by binding directly to DNA. May also regulate the expression of genes outside the dcw cluster. The polypeptide is Transcriptional regulator MraZ (Escherichia coli (strain K12)).